The chain runs to 199 residues: NAD(P)H dehydrogenase (quinone) (199 aa).

Positions Val4 to Val190 constitute a Flavodoxin-like domain. Residues Ser10 to Ile15 and Thr78 to Tyr80 each bind FMN. Position 12 (Tyr12) interacts with NAD(+). Residue Trp98 participates in substrate binding. Residues Ser113 to Gly119 and His134 contribute to the FMN site.

The protein belongs to the WrbA family. FMN is required as a cofactor.

The catalysed reaction is a quinone + NADH + H(+) = a quinol + NAD(+). The enzyme catalyses a quinone + NADPH + H(+) = a quinol + NADP(+). This chain is NAD(P)H dehydrogenase (quinone), found in Paraburkholderia phymatum (strain DSM 17167 / CIP 108236 / LMG 21445 / STM815) (Burkholderia phymatum).